The primary structure comprises 226 residues: Enolase-phosphatase E1 (226 aa).

It belongs to the HAD-like hydrolase superfamily. MasA/MtnC family. In terms of assembly, monomer. Requires Mg(2+) as cofactor.

It carries out the reaction 5-methylsulfanyl-2,3-dioxopentyl phosphate + H2O = 1,2-dihydroxy-5-(methylsulfanyl)pent-1-en-3-one + phosphate. Its pathway is amino-acid biosynthesis; L-methionine biosynthesis via salvage pathway; L-methionine from S-methyl-5-thio-alpha-D-ribose 1-phosphate: step 3/6. It participates in amino-acid biosynthesis; L-methionine biosynthesis via salvage pathway; L-methionine from S-methyl-5-thio-alpha-D-ribose 1-phosphate: step 4/6. Its function is as follows. Bifunctional enzyme that catalyzes the enolization of 2,3-diketo-5-methylthiopentyl-1-phosphate (DK-MTP-1-P) into the intermediate 2-hydroxy-3-keto-5-methylthiopentenyl-1-phosphate (HK-MTPenyl-1-P), which is then dephosphorylated to form the acireductone 1,2-dihydroxy-3-keto-5-methylthiopentene (DHK-MTPene). The polypeptide is Enolase-phosphatase E1 (Shewanella baltica (strain OS155 / ATCC BAA-1091)).